The following is a 365-amino-acid chain: Flagellar P-ring protein (365 aa).

The signal sequence occupies residues 1–19 (MIKFLSALILLLVITAAQA).

The protein belongs to the FlgI family. In terms of assembly, the basal body constitutes a major portion of the flagellar organelle and consists of four rings (L,P,S, and M) mounted on a central rod.

The protein localises to the periplasm. The protein resides in the bacterial flagellum basal body. In terms of biological role, assembles around the rod to form the L-ring and probably protects the motor/basal body from shearing forces during rotation. The polypeptide is Flagellar P-ring protein (Escherichia coli O81 (strain ED1a)).